Consider the following 291-residue polypeptide: Tetrahydromethanopterin:alpha-L-glutamate ligase (291 aa).

The 186-residue stretch at 101–286 folds into the ATP-grasp domain; the sequence is SVFLELNNLP…IADKLLEKII (186 aa). ATP is bound by residues Lys136, 175–187, and Arg203; that span reads QEFIKPVRNEHRD. Mg(2+) is bound by residues Asp247, Glu259, and Asn261. Mn(2+) contacts are provided by Asp247, Glu259, and Asn261.

Belongs to the RimK family. MptN subfamily. Homodimer. Mg(2+) serves as cofactor. Requires Mn(2+) as cofactor.

The enzyme catalyses 5,6,7,8-tetrahydromethanopterin + L-glutamate + ATP = 5,6,7,8-tetrahydrosarcinapterin + ADP + phosphate + H(+). Its pathway is cofactor biosynthesis; 5,6,7,8-tetrahydrosarcinapterin biosynthesis. Catalyzes the ATP or GTP-dependent addition of one L-glutamate molecule to tetrahydromethanopterin, producing tetrahydrosarcinapterin. This chain is Tetrahydromethanopterin:alpha-L-glutamate ligase (mptN), found in Methanocaldococcus jannaschii (strain ATCC 43067 / DSM 2661 / JAL-1 / JCM 10045 / NBRC 100440) (Methanococcus jannaschii).